Here is a 418-residue protein sequence, read N- to C-terminus: Voltage-gated ClC-type chloride channel ClcB (418 aa).

10 consecutive transmembrane segments (helical) span residues 5 to 25 (LLIA…FRHA), 54 to 74 (LLTP…WQKF), 146 to 166 (LWIA…PLAG), 168 to 188 (LFIA…PVII), 222 to 242 (ALII…LTLM), 258 to 278 (WQLA…PAVW), 291 to 311 (APPL…AVLA), 316 to 336 (GAPG…GMLY), 352 to 372 (LLLG…APIM), and 380 to 400 (MTGE…ASVI).

It belongs to the chloride channel (TC 2.A.49) family. ClcB subfamily.

The protein localises to the cell inner membrane. Its function is as follows. Probably acts as an electrical shunt for an outwardly-directed proton pump that is linked to amino acid decarboxylation, as part of the extreme acid resistance (XAR) response. This is Voltage-gated ClC-type chloride channel ClcB from Escherichia coli (strain ATCC 8739 / DSM 1576 / NBRC 3972 / NCIMB 8545 / WDCM 00012 / Crooks).